The primary structure comprises 93 residues: Small ribosomal subunit protein uS19 (93 aa).

It belongs to the universal ribosomal protein uS19 family.

In terms of biological role, protein S19 forms a complex with S13 that binds strongly to the 16S ribosomal RNA. The chain is Small ribosomal subunit protein uS19 from Ehrlichia ruminantium (strain Welgevonden).